Consider the following 439-residue polypeptide: GTPase Der (439 aa).

EngA-type G domains follow at residues 4–168 (PIVA…KDDE) and 177–352 (INIA…DNYT). GTP is bound by residues 10 to 17 (GRPNVGKS), 57 to 61 (DTGGI), 120 to 123 (NKID), 183 to 190 (GKPNVGKS), 230 to 234 (DTAGL), and 295 to 298 (NKWD). In terms of domain architecture, KH-like spans 353-437 (KRVKTGVLND…GIKLEFRERK (85 aa)).

It belongs to the TRAFAC class TrmE-Era-EngA-EngB-Septin-like GTPase superfamily. EngA (Der) GTPase family. Associates with the 50S ribosomal subunit.

GTPase that plays an essential role in the late steps of ribosome biogenesis. This chain is GTPase Der, found in Clostridium botulinum (strain Okra / Type B1).